A 283-amino-acid chain; its full sequence is Phosphatidylglycerol--prolipoprotein diacylglyceryl transferase (283 aa).

The next 4 membrane-spanning stretches (helical) occupy residues 20-40 (LGPV…FVAM), 51-71 (GGNP…GIIG), 97-117 (ITNG…AVYF), and 123-143 (GVAF…AQAI). Arg-145 provides a ligand contact to a 1,2-diacyl-sn-glycero-3-phospho-(1'-sn-glycerol). The next 2 membrane-spanning stretches (helical) occupy residues 192-212 (VHPT…VLLW) and 255-275 (INVI…FALR).

The protein belongs to the Lgt family.

Its subcellular location is the cell membrane. The enzyme catalyses L-cysteinyl-[prolipoprotein] + a 1,2-diacyl-sn-glycero-3-phospho-(1'-sn-glycerol) = an S-1,2-diacyl-sn-glyceryl-L-cysteinyl-[prolipoprotein] + sn-glycerol 1-phosphate + H(+). The protein operates within protein modification; lipoprotein biosynthesis (diacylglyceryl transfer). Its function is as follows. Catalyzes the transfer of the diacylglyceryl group from phosphatidylglycerol to the sulfhydryl group of the N-terminal cysteine of a prolipoprotein, the first step in the formation of mature lipoproteins. The chain is Phosphatidylglycerol--prolipoprotein diacylglyceryl transferase from Corynebacterium diphtheriae (strain ATCC 700971 / NCTC 13129 / Biotype gravis).